Consider the following 336-residue polypeptide: MLFIQDDVYKEYVKMMMNIVILCMILCISLSFWIISITASTYSGSLRPISPWRWLVSVLTPIIIVWHGIKKRSLDNSGALGGLLVGFILTIANYSFFSALLTFFFISSKLTKWKGEVKKCYDSEYKEGGQRNWVQVFCNGGLPAELALLYMIENGPGEIPIDFSKEYTASWMCLSLLGALASSAGDTWASEIGPVLSKSSPRLITTWEKVPVGTNGGVTPVGLISSLLGGTSVGVAYFVTQLIFVPDLEIAAPQWPIVIYGGMAGLLGSLIDSYLGAIMQYSGYDESTGKIVNHPTKEAKFICGKPILDNNAVNLFSSILIALLLPTAAWSFWPRL.

6 helical membrane passes run 19–39 (IVIL…SITA), 49–69 (ISPW…WHGI), 86–106 (GFIL…FFFI), 224–244 (ISSL…QLIF), 250–270 (IAAP…LGSL), and 313–333 (VNLF…WSFW).

It belongs to the TMEM19 family.

It is found in the membrane. The polypeptide is Transmembrane protein 19 (tmem19) (Xenopus tropicalis (Western clawed frog)).